Here is a 234-residue protein sequence, read N- to C-terminus: Phosphoribosylaminoimidazole-succinocarboxamide synthase (234 aa).

This sequence belongs to the SAICAR synthetase family.

The enzyme catalyses 5-amino-1-(5-phospho-D-ribosyl)imidazole-4-carboxylate + L-aspartate + ATP = (2S)-2-[5-amino-1-(5-phospho-beta-D-ribosyl)imidazole-4-carboxamido]succinate + ADP + phosphate + 2 H(+). It participates in purine metabolism; IMP biosynthesis via de novo pathway; 5-amino-1-(5-phospho-D-ribosyl)imidazole-4-carboxamide from 5-amino-1-(5-phospho-D-ribosyl)imidazole-4-carboxylate: step 1/2. This Pyrococcus furiosus (strain ATCC 43587 / DSM 3638 / JCM 8422 / Vc1) protein is Phosphoribosylaminoimidazole-succinocarboxamide synthase.